The primary structure comprises 293 residues: Phosphate import ATP-binding protein PstB (293 aa).

In terms of domain architecture, ABC transporter spans 46 to 288; the sequence is FGIRGVDVFY…PDHELTEAYI (243 aa). Position 78 to 85 (78 to 85) interacts with ATP; that stretch reads GPSGCGKS.

Belongs to the ABC transporter superfamily. Phosphate importer (TC 3.A.1.7) family. As to quaternary structure, the complex is composed of two ATP-binding proteins (PstB), two transmembrane proteins (PstC and PstA) and a solute-binding protein (PstS).

The protein localises to the cell inner membrane. It carries out the reaction phosphate(out) + ATP + H2O = ADP + 2 phosphate(in) + H(+). Functionally, part of the ABC transporter complex PstSACB involved in phosphate import. Responsible for energy coupling to the transport system. This is Phosphate import ATP-binding protein PstB from Saccharophagus degradans (strain 2-40 / ATCC 43961 / DSM 17024).